The sequence spans 261 residues: HTH-type transcriptional repressor CsqR (261 aa).

In terms of domain architecture, HTH deoR-type spans 8 to 63 (GNPRHDQLLMLIAERGYMNIDELANLLDVSTQTVRRDIRKLSEQGLITRHHGGAGR). Residues 25 to 44 (MNIDELANLLDVSTQTVRRD) constitute a DNA-binding region (H-T-H motif).

In terms of assembly, monomer in the absence of DNA. Exhibits a high level of cooperativity once it is bound to its target DNA.

With respect to regulation, inactivated in the presence of the effectors sulfoquinovose and sulfoquinovosyl glycerol, leading to the de-repression of the target genes. In terms of biological role, involved in the regulation of the sulfoquinovose operon. Represses the expression of the yihUTS operon and of the yihV and csqR genes. Binds DNA inside the spacer between the bidirectional transcription units comprising the yihUTS operon and the yihV gene, and upstream the csqR gene itself. The sequence is that of HTH-type transcriptional repressor CsqR from Escherichia coli (strain K12).